The sequence spans 631 residues: MNRNTPKARGASSLAMAVAMGLAVLTTAPATANDQLVELAKDPANWVMTGRDYNAQNYSEMTDINKENVKQLRPAWSFSTGVLHGHEGTPLVVGDRMFIHTPFPNTTFALDLNEPGKILWQNKPKQNPTARTVACCDVVNRGLAYWPGDDQVKPLIFRTQLDGHIVAMDAETGETRWIMENSDIKVGSTLTIAPYVIKDLVLVGSSGAELGVRGYVTAYDVKSGEMRWRAFATGPDEELLLAEDFNAPNPHYGQKNLGLETWEGDAWKIGGGTNWGWYAYDPEVDLFYYGSGNPAPWNETMRPGDNKWTMAIWGREATTGEAKFAYQKTPHDEWDYAGVNVMMLSEQEDKQGQMRKLLTHPDRNGIVYTLDRTNGDLISADKMDDTVNWVKEVQLDTGLPVRDPEFGTRMDHKARDICPSAMGYHNQGHDSYDPERKVFMLGINHICMDWEPFMLPYRAGQFFVGATLTMYPGPKATAERAGAGQIKAYDAISGEMKWEKMERFSVWGGTMATAGGLTFYVTLDGFIKARDSDTGDLLWKFKLPSGVIGHPMTYKHDGRQYVAIMYGVGGWPGVGLVFDLADPTAGLGSVGAFKRLQEFTQMGGGVMVFSLDGESPYSDPNVGEYAPGEPT.

A signal peptide spans Met-1–Ala-32. Residues Cys-135 and Cys-136 are joined by a disulfide bond. Ca(2+)-binding residues include Glu-209 and Asn-293. The Proton acceptor role is filled by Asp-335. Cys-418 and Cys-447 are disulfide-bonded.

Belongs to the bacterial PQQ dehydrogenase family. Heterotetramer composed of 2 alpha and 2 beta subunits. Pyrroloquinoline quinone is required as a cofactor. Requires Ca(2+) as cofactor.

The protein resides in the periplasm. It catalyses the reaction 2 Fe(III)-[cytochrome cL] + a primary alcohol = 2 Fe(II)-[cytochrome cL] + an aldehyde + 2 H(+). Functionally, catalyzes the oxidation of primary alcohols including methanol. This chain is Methanol dehydrogenase [cytochrome c] subunit 1 (moxF), found in Paracoccus denitrificans.